The primary structure comprises 223 residues: Thiamine-phosphate synthase (223 aa).

4-amino-2-methyl-5-(diphosphooxymethyl)pyrimidine contacts are provided by residues 37-41 (QLREK) and Asn69. Residues Asp70 and Asp89 each coordinate Mg(2+). Ser108 is a 4-amino-2-methyl-5-(diphosphooxymethyl)pyrimidine binding site. 134-136 (TGT) is a binding site for 2-[(2R,5Z)-2-carboxy-4-methylthiazol-5(2H)-ylidene]ethyl phosphate. 4-amino-2-methyl-5-(diphosphooxymethyl)pyrimidine is bound at residue Lys137. 2-[(2R,5Z)-2-carboxy-4-methylthiazol-5(2H)-ylidene]ethyl phosphate is bound by residues Gly167 and 187-188 (VS). The segment at 197 to 223 (AAATRKLQGSVDTASVESQLPSEEPSA) is disordered. Residues 206–217 (SVDTASVESQLP) are compositionally biased toward polar residues.

This sequence belongs to the thiamine-phosphate synthase family. Requires Mg(2+) as cofactor.

It carries out the reaction 2-[(2R,5Z)-2-carboxy-4-methylthiazol-5(2H)-ylidene]ethyl phosphate + 4-amino-2-methyl-5-(diphosphooxymethyl)pyrimidine + 2 H(+) = thiamine phosphate + CO2 + diphosphate. The enzyme catalyses 2-(2-carboxy-4-methylthiazol-5-yl)ethyl phosphate + 4-amino-2-methyl-5-(diphosphooxymethyl)pyrimidine + 2 H(+) = thiamine phosphate + CO2 + diphosphate. It catalyses the reaction 4-methyl-5-(2-phosphooxyethyl)-thiazole + 4-amino-2-methyl-5-(diphosphooxymethyl)pyrimidine + H(+) = thiamine phosphate + diphosphate. It functions in the pathway cofactor biosynthesis; thiamine diphosphate biosynthesis; thiamine phosphate from 4-amino-2-methyl-5-diphosphomethylpyrimidine and 4-methyl-5-(2-phosphoethyl)-thiazole: step 1/1. In terms of biological role, condenses 4-methyl-5-(beta-hydroxyethyl)thiazole monophosphate (THZ-P) and 2-methyl-4-amino-5-hydroxymethyl pyrimidine pyrophosphate (HMP-PP) to form thiamine monophosphate (TMP). The chain is Thiamine-phosphate synthase from Haloquadratum walsbyi (strain DSM 16790 / HBSQ001).